Reading from the N-terminus, the 425-residue chain is Pyruvate dehydrogenase E1 component subunit alpha-3, chloroplastic (425 aa).

The N-terminal 66 residues, 1–66 (MAAASSFTAA…VLPGNKAAPA (66 aa)), are a transit peptide targeting the chloroplast. Pyruvate contacts are provided by His-109, Tyr-135, Arg-136, Ala-184, Ile-186, Asp-224, Gly-225, and Asn-253. Residues Tyr-135, Arg-136, Ala-184, Ile-186, Asp-224, Gly-225, Asn-253, and His-322 each coordinate thiamine diphosphate. Residue Asp-224 coordinates Mg(2+). Asn-253 provides a ligand contact to Mg(2+).

As to quaternary structure, tetramer of 2 alpha and 2 beta subunits. Requires thiamine diphosphate as cofactor. Mg(2+) is required as a cofactor.

The protein resides in the plastid. It localises to the chloroplast. It catalyses the reaction N(6)-[(R)-lipoyl]-L-lysyl-[protein] + pyruvate + H(+) = N(6)-[(R)-S(8)-acetyldihydrolipoyl]-L-lysyl-[protein] + CO2. Functionally, the pyruvate dehydrogenase complex catalyzes the overall conversion of pyruvate to acetyl-CoA and CO(2). It contains multiple copies of three enzymatic components: pyruvate dehydrogenase (E1), dihydrolipoamide acetyltransferase (E2) and lipoamide dehydrogenase (E3). The sequence is that of Pyruvate dehydrogenase E1 component subunit alpha-3, chloroplastic from Oryza sativa subsp. japonica (Rice).